The chain runs to 209 residues: Orotate phosphoribosyltransferase (209 aa).

5-phospho-alpha-D-ribose 1-diphosphate is bound by residues arginine 96, lysine 100, histidine 102, and 122-130 (EDLISTGGS). Serine 126 contributes to the orotate binding site.

Belongs to the purine/pyrimidine phosphoribosyltransferase family. PyrE subfamily. As to quaternary structure, homodimer. Requires Mg(2+) as cofactor.

The catalysed reaction is orotidine 5'-phosphate + diphosphate = orotate + 5-phospho-alpha-D-ribose 1-diphosphate. The protein operates within pyrimidine metabolism; UMP biosynthesis via de novo pathway; UMP from orotate: step 1/2. In terms of biological role, catalyzes the transfer of a ribosyl phosphate group from 5-phosphoribose 1-diphosphate to orotate, leading to the formation of orotidine monophosphate (OMP). This Streptococcus pyogenes serotype M2 (strain MGAS10270) protein is Orotate phosphoribosyltransferase.